We begin with the raw amino-acid sequence, 196 residues long: dITP/XTP pyrophosphatase (196 aa).

Residue 7–12 (THNPGK) participates in substrate binding. D40 and D69 together coordinate Mg(2+). D69 serves as the catalytic Proton acceptor. Substrate is bound by residues S70, 150 to 153 (FGYD), K173, and 178 to 179 (HR).

This sequence belongs to the HAM1 NTPase family. Homodimer. The cofactor is Mg(2+).

The catalysed reaction is XTP + H2O = XMP + diphosphate + H(+). It carries out the reaction dITP + H2O = dIMP + diphosphate + H(+). The enzyme catalyses ITP + H2O = IMP + diphosphate + H(+). In terms of biological role, pyrophosphatase that catalyzes the hydrolysis of nucleoside triphosphates to their monophosphate derivatives, with a high preference for the non-canonical purine nucleotides XTP (xanthosine triphosphate), dITP (deoxyinosine triphosphate) and ITP. Seems to function as a house-cleaning enzyme that removes non-canonical purine nucleotides from the nucleotide pool, thus preventing their incorporation into DNA/RNA and avoiding chromosomal lesions. This Exiguobacterium sp. (strain ATCC BAA-1283 / AT1b) protein is dITP/XTP pyrophosphatase.